The primary structure comprises 171 residues: Small ribosomal subunit protein uS5 (171 aa).

One can recognise an S5 DRBM domain in the interval 14–77; sequence LKEKLVMVNR…EKAKKKLLKI (64 aa).

Belongs to the universal ribosomal protein uS5 family. In terms of assembly, part of the 30S ribosomal subunit. Contacts proteins S4 and S8.

Its function is as follows. With S4 and S12 plays an important role in translational accuracy. In terms of biological role, located at the back of the 30S subunit body where it stabilizes the conformation of the head with respect to the body. The sequence is that of Small ribosomal subunit protein uS5 from Karelsulcia muelleri (strain GWSS) (Sulcia muelleri).